The primary structure comprises 172 residues: Phosphopantetheine adenylyltransferase (172 aa).

Thr-13 provides a ligand contact to substrate. Residues 13–14 (TF) and His-21 each bind ATP. Residues Lys-45, Leu-81, and Arg-95 each contribute to the substrate site. ATP-binding positions include 96–98 (GLR), Glu-106, and 131–137 (SQFISSR).

The protein belongs to the bacterial CoaD family. Homohexamer. Requires Mg(2+) as cofactor.

Its subcellular location is the cytoplasm. The enzyme catalyses (R)-4'-phosphopantetheine + ATP + H(+) = 3'-dephospho-CoA + diphosphate. Its pathway is cofactor biosynthesis; coenzyme A biosynthesis; CoA from (R)-pantothenate: step 4/5. Reversibly transfers an adenylyl group from ATP to 4'-phosphopantetheine, yielding dephospho-CoA (dPCoA) and pyrophosphate. This Rhodospirillum rubrum (strain ATCC 11170 / ATH 1.1.1 / DSM 467 / LMG 4362 / NCIMB 8255 / S1) protein is Phosphopantetheine adenylyltransferase.